The primary structure comprises 497 residues: Galactose-1-phosphate uridylyltransferase (497 aa).

Belongs to the galactose-1-phosphate uridylyltransferase type 2 family.

Its subcellular location is the cytoplasm. It carries out the reaction alpha-D-galactose 1-phosphate + UDP-alpha-D-glucose = alpha-D-glucose 1-phosphate + UDP-alpha-D-galactose. It functions in the pathway carbohydrate metabolism; galactose metabolism. The polypeptide is Galactose-1-phosphate uridylyltransferase (Clostridium acetobutylicum (strain ATCC 824 / DSM 792 / JCM 1419 / IAM 19013 / LMG 5710 / NBRC 13948 / NRRL B-527 / VKM B-1787 / 2291 / W)).